The chain runs to 177 residues: Austinoid biosynthesis clusters protein F (177 aa).

The protein belongs to the trt14 isomerase family. Homodimer.

Its pathway is secondary metabolite biosynthesis; terpenoid biosynthesis. Functionally, part of the gene cluster B that mediates the biosynthesis of austinol and dehydroaustinol, two fungal meroterpenoids. The first step of the pathway is the synthesis of 3,5-dimethylorsellinic acid by the polyketide synthase ausA. 3,5-dimethylorsellinic acid is then prenylated by the polyprenyl transferase ausN. Further epoxidation by the FAD-dependent monooxygenase ausM and cyclization by the probable terpene cyclase ausL lead to the formation of protoaustinoid A. Protoaustinoid A is then oxidized to spiro-lactone preaustinoid A3 by the combined action of the FAD-binding monooxygenases ausB and ausC, and the dioxygenase ausE. Acid-catalyzed keto-rearrangement and ring contraction of the tetraketide portion of preaustinoid A3 by ausJ lead to the formation of preaustinoid A4. The aldo-keto reductase ausK, with the help of ausH, is involved in the next step by transforming preaustinoid A4 into isoaustinone which is in turn hydroxylated by the P450 monooxygenase ausI to form austinolide. Finally, the cytochrome P450 monooxygenase ausG modifies austinolide to austinol. Austinol can be further modified to dehydroaustinol which forms a diffusible complex with diorcinol that initiates conidiation. Due to genetic rearrangements of the clusters and the subsequent loss of some enzymes, the end products of the Emericella nidulans austinoid biosynthesis clusters are austinol and dehydroaustinol, even if additional enzymes, such as the O-acetyltransferase ausQ and the cytochrome P450 monooxygenase ausR are still functional. In Emericella nidulans (strain FGSC A4 / ATCC 38163 / CBS 112.46 / NRRL 194 / M139) (Aspergillus nidulans), this protein is Austinoid biosynthesis clusters protein F.